We begin with the raw amino-acid sequence, 298 residues long: ATP phosphoribosyltransferase (298 aa).

Belongs to the ATP phosphoribosyltransferase family. Long subfamily. It depends on Mg(2+) as a cofactor.

It is found in the cytoplasm. The catalysed reaction is 1-(5-phospho-beta-D-ribosyl)-ATP + diphosphate = 5-phospho-alpha-D-ribose 1-diphosphate + ATP. It participates in amino-acid biosynthesis; L-histidine biosynthesis; L-histidine from 5-phospho-alpha-D-ribose 1-diphosphate: step 1/9. Feedback inhibited by histidine. Functionally, catalyzes the condensation of ATP and 5-phosphoribose 1-diphosphate to form N'-(5'-phosphoribosyl)-ATP (PR-ATP). Has a crucial role in the pathway because the rate of histidine biosynthesis seems to be controlled primarily by regulation of HisG enzymatic activity. The protein is ATP phosphoribosyltransferase of Aeromonas salmonicida (strain A449).